The following is a 638-amino-acid chain: 1-deoxy-D-xylulose-5-phosphate synthase (638 aa).

Residues His-78 and 119-121 contribute to the thiamine diphosphate site; that span reads AHS. Asp-150 is a Mg(2+) binding site. Thiamine diphosphate contacts are provided by residues 151 to 152, Asn-179, Tyr-288, and Glu-370; that span reads GS. Asn-179 contacts Mg(2+).

Belongs to the transketolase family. DXPS subfamily. In terms of assembly, homodimer. The cofactor is Mg(2+). Requires thiamine diphosphate as cofactor.

It carries out the reaction D-glyceraldehyde 3-phosphate + pyruvate + H(+) = 1-deoxy-D-xylulose 5-phosphate + CO2. It functions in the pathway metabolic intermediate biosynthesis; 1-deoxy-D-xylulose 5-phosphate biosynthesis; 1-deoxy-D-xylulose 5-phosphate from D-glyceraldehyde 3-phosphate and pyruvate: step 1/1. Functionally, catalyzes the acyloin condensation reaction between C atoms 2 and 3 of pyruvate and glyceraldehyde 3-phosphate to yield 1-deoxy-D-xylulose-5-phosphate (DXP). This is 1-deoxy-D-xylulose-5-phosphate synthase from Brucella anthropi (strain ATCC 49188 / DSM 6882 / CCUG 24695 / JCM 21032 / LMG 3331 / NBRC 15819 / NCTC 12168 / Alc 37) (Ochrobactrum anthropi).